Reading from the N-terminus, the 577-residue chain is Arginine--tRNA ligase (577 aa).

The 'HIGH' region signature appears at 122–132 (PNVAKEMHVGH).

It belongs to the class-I aminoacyl-tRNA synthetase family. Monomer.

It localises to the cytoplasm. The enzyme catalyses tRNA(Arg) + L-arginine + ATP = L-arginyl-tRNA(Arg) + AMP + diphosphate. The polypeptide is Arginine--tRNA ligase (Vibrio vulnificus (strain CMCP6)).